Reading from the N-terminus, the 408-residue chain is Tripartite motif-containing protein 59 (408 aa).

The segment at 10–60 (CSICYSLFEDPRVLPCSHTFCRSCLEGVIQLSSNFSIWRPLRVPLKCPNCR) adopts an RING-type zinc-finger fold. A B box-type zinc finger spans residues 92-134 (SDVATCSEHYRQPLNVYCLLDKKLVCGHCLTIGKHNGHPIDDL). Residues cysteine 97, histidine 100, cysteine 120, and histidine 126 each contribute to the Zn(2+) site. Residues 163–247 (LIEKLKEQKA…LNTSIQKEES (85 aa)) adopt a coiled-coil conformation. The helical transmembrane segment at 333–353 (ANPLSVTFIFTVIIAIAVLSF) threads the bilayer.

It belongs to the TRIM/RBCC family. As to quaternary structure, interacts with ECSIT.

The protein localises to the endoplasmic reticulum membrane. May serve as a multifunctional regulator for innate immune signaling pathways. The polypeptide is Tripartite motif-containing protein 59 (TRIM59) (Gallus gallus (Chicken)).